A 132-amino-acid polypeptide reads, in one-letter code: Sodium/calcium exchanger regulatory protein 1 (132 aa).

Arg126 and Tyr128 together coordinate (9Z)-hexadecenoate.

The protein belongs to the calycin superfamily. Fatty-acid binding protein (FABP) family. In terms of assembly, interacts with Na(+)/Ca(2+) exchanger NCXSQ1; ReP1-NCXSQ phosphorylation does not affect the interaction. Phosphorylated. Phosphorylation may result in the release of the bound fatty acid. In terms of tissue distribution, expressed in the optic nerve (at protein level).

It localises to the cytoplasm. Its subcellular location is the membrane. Functionally, binds and may transport fatty acids such as palmitoleate. Also binds poly-phosphoinositides including phosphatidylinositol 4-phosphate (PtdIns(4)P), phosphatidylinositol 4,5-bisphosphate (PtdIns(4,5)P2) and phosphatidylinositol 3,4,5-trisphosphate (PtdIns(3,4,5)P3), and phosphatidic acid. When phosphorylated, stimulates the activity of optic nerve Na(+)/Ca(2+) exchanger. This Doryteuthis pealeii (Longfin inshore squid) protein is Sodium/calcium exchanger regulatory protein 1.